Reading from the N-terminus, the 145-residue chain is 3-dehydroquinate dehydratase (145 aa).

Tyr24 functions as the Proton acceptor in the catalytic mechanism. Substrate is bound by residues Asn75, His81, and Asp88. His101 (proton donor) is an active-site residue. Residues 102–103 and Arg112 each bind substrate; that span reads LS.

This sequence belongs to the type-II 3-dehydroquinase family. In terms of assembly, homododecamer.

It carries out the reaction 3-dehydroquinate = 3-dehydroshikimate + H2O. Its pathway is metabolic intermediate biosynthesis; chorismate biosynthesis; chorismate from D-erythrose 4-phosphate and phosphoenolpyruvate: step 3/7. Catalyzes a trans-dehydration via an enolate intermediate. This Phenylobacterium zucineum (strain HLK1) protein is 3-dehydroquinate dehydratase.